The chain runs to 462 residues: L-seryl-tRNA(Sec) selenium transferase (462 aa).

K295 bears the N6-(pyridoxal phosphate)lysine mark.

Belongs to the SelA family. In terms of assembly, homodecamer; pentamer of dimers. Binds only one seryl-tRNA(Sec) per dimer. Pyridoxal 5'-phosphate serves as cofactor.

Its subcellular location is the cytoplasm. It catalyses the reaction L-seryl-tRNA(Sec) + selenophosphate + H(+) = L-selenocysteinyl-tRNA(Sec) + phosphate. It participates in aminoacyl-tRNA biosynthesis; selenocysteinyl-tRNA(Sec) biosynthesis; selenocysteinyl-tRNA(Sec) from L-seryl-tRNA(Sec) (bacterial route): step 1/1. Converts seryl-tRNA(Sec) to selenocysteinyl-tRNA(Sec) required for selenoprotein biosynthesis. The sequence is that of L-seryl-tRNA(Sec) selenium transferase from Klebsiella pneumoniae subsp. pneumoniae (strain ATCC 700721 / MGH 78578).